The primary structure comprises 224 residues: MKITQWPAHERPREKLLTQGPDALSDAELLAIFLRTGIKGLSAVDLARNLLNTFGSLRGLISASQQDFCLAKGLGEAKFVQLQASIELSQRFFAEQLQRETVFNSAQQTKHFLIAQLRDEPNEVFGMLLLDSQHQLIKFRKMFFGTIDSASVYPRVLVKQALEDNAAAVILTHNHPSGVAEPSQADEHITARIISAMSLLDIKVLDHLVVGDGVAVSFAERGLI.

One can recognise an MPN domain in the interval 102 to 224 (VFNSAQQTKH…AVSFAERGLI (123 aa)). Positions 173, 175, and 186 each coordinate Zn(2+). The short motif at 173-186 (HNHPSGVAEPSQAD) is the JAMM motif element.

The protein belongs to the UPF0758 family.

In Pseudoalteromonas atlantica (strain T6c / ATCC BAA-1087), this protein is UPF0758 protein Patl_0046.